The sequence spans 446 residues: Vacuolar cation/proton exchanger 4 (446 aa).

A compositionally biased stretch (low complexity) spans 1–16 (MSSISTESSSNLSLLE). Residues 1 to 33 (MSSISTESSSNLSLLENGGGGSDKPTAETSRRV) form a disordered region. At 1-69 (MSSISTESSS…MRRILTNLQE (69 aa)) the chain is on the cytoplasmic side. The chain crosses the membrane as a helical span at residues 70–90 (VLLGTKLFILFPAVPLAVVAH). At 91–96 (RYDCPR) the chain is on the extracellular side. The chain crosses the membrane as a helical span at residues 97 to 117 (AWVFALSLLGLTPLAERISFL). At 118 to 128 (TEQIAFHTGPT) the chain is on the cytoplasmic side. A helical membrane pass occupies residues 129 to 149 (VGGLMNATCGNATEMIIAILA). Positions 138–173 (GNATEMIIAILAVGQRKMRIVKLSLLGSILSNLLFV) are cation selection. Residues 150 to 162 (VGQRKMRIVKLSL) are Extracellular-facing. A helical membrane pass occupies residues 163 to 183 (LGSILSNLLFVLGTSLFLGGI). The Cytoplasmic segment spans residues 184–196 (SNLRKHQSFDPRQ). A helical membrane pass occupies residues 197 to 217 (GDMNSMLLYLALLCQTLPMIM). Residues 218–238 (RFTMEAEEYDGSDVVVLSRAS) are Extracellular-facing. A helical transmembrane segment spans residues 239–259 (SFVMLIAYLAFLIFHLFSSHL). Residues 260–285 (SPPPPPLPQREDVHDDDVSDKEEEGA) are Cytoplasmic-facing. The helical transmembrane segment at 286–306 (VIGMWSAIFWLIIMTLLVALL) threads the bilayer. Topologically, residues 307-319 (SDYLVSTIQDAAD) are extracellular. Residues 320–340 (SWGLSVGFIGIILLPIVGNAA) traverse the membrane as a helical segment. The tract at residues 337 to 372 (GNAAEHAGAVIFAFRNKLDITLGIALGSATQIALFV) is cation selection. At 341–359 (EHAGAVIFAFRNKLDITLG) the chain is on the cytoplasmic side. The helical transmembrane segment at 360–380 (IALGSATQIALFVVPVTVLVA) threads the bilayer. Over 381-388 (WTMGIEMD) the chain is Extracellular. The chain crosses the membrane as a helical span at residues 389-409 (LNFNLLETACFALSILVTSLV). Topologically, residues 410–416 (LQDGTSN) are cytoplasmic. The chain crosses the membrane as a helical span at residues 417-437 (YMKGLVLLLCYVVIAACFFVS). Topologically, residues 438-446 (NSPSSKLLF) are extracellular.

This sequence belongs to the Ca(2+):cation antiporter (CaCA) (TC 2.A.19) family. Cation/proton exchanger (CAX) subfamily. In terms of tissue distribution, expressed at low levels in all tissues.

The protein localises to the vacuole membrane. Vacuolar cation/proton exchanger (CAX). Translocates Ca(2+) and other metal ions into vacuoles using the proton gradient formed by H(+)-ATPase and H(+)-pyrophosphatase. Cation selectivity transport in tobacco root tonoplast vesicles is Cd(2+)&gt;Zn(2+)&gt;&gt;Ca(2+)&gt;&gt;&gt;Mn(2+). The sequence is that of Vacuolar cation/proton exchanger 4 (CAX4) from Arabidopsis thaliana (Mouse-ear cress).